We begin with the raw amino-acid sequence, 1189 residues long: MTDSEHAGHDREDGELEDGEIDDAGFEEIQEKEAKENEKQKSEKAYRKSRKKHKKEREKKKSKRRKREKHKHNSPSSDDSSDYSLDSDVEHTESSHKKRTGFYRDYDIPFTQRGHISGSYITSKKGQHNKKFKSKEYDEYSTYSDDNFGNYSDDNFGNYGQETEEDFANQLKQYRQAKETSNIALGSSFSKESGKKQRMKGVQQGIEQRVKSFNVGRGRGLPKKIKRKERGGRTNKGPNVFSVSDDFQEYNKPGKKWKVMTQEFINQHTVEHKGKQICKYFLEGRCIKGDQCKFDHDAELEKRKEICKFYLQGYCTKGENCIYMHNEFPCKFYHSGAKCYQGDNCKFSHDDLTKETKKLLDKVLNTDEELINEDERELEELRKRGITPLPKPPPGVGLLPTPPEHFPFSDPEDDFQTDFSDDFRKIPSLFEIVVKPTVDLAHKIGRKPPAFYTSASPPGPQFQGSSPHPQHIYSSGSSPGPGPNMSQGHSSPVMHPGSPGHHPCAGPPGLPVPQSPPLPPGPPEIVGPQNQAGVLVQPDTSLTPPSMGGAYHSPGFPGHVMKVPRENHCSPGSSYQQSPGEMQLNTNYESLQNPAEFYDNYYAQHSIHNFQPPNNSGDGMWHGEFAQQQPPVVQDSPNHGSGSDGSSTRTGHGPLPVPGLLPAVQRALFVRLTQRYQEDEEQTSTQPHRAPSKEEDDTVNWYSSSEEEEGSSVKSILKTLQKQTETLRNQQQPSTELSTPTDPRLAKEKSKGNQVVDPRLRTIPRQDIRKPSESAPLDLRLAWDPRKLRGNGSGHIGSSVGGAKFDLHHANAGTNVKHKRGDDDDEDTERELREKAFLIPLDASPGIMLQDPRSQLRQFSHIKMDITLTKPNFAKHIVWAPEDLLPVPLPKPDPVSSINLPLPPLIADQRLNRLWNTKSDLHQNTVSIDPKLAAKAKINTTNREGYLEQFGDSHGSGAKLGDPRLQKNFDPRLHRLPNTESHQVVMKDSHASKGAPHLPRSNPGSSQPSGAGTSNSGSGALPPYAPKLSSSAGLPLGTSTSVLSGISLYDPRDHGSSSTSELATASSGENSKNQKKSGGLKSSDKTEPSPGEAILPQKPSPNVGVTLEGPADPQADVPRSSGKVQVPAVHSLPVQALTGLIRPQYSDPRQARQPGQGSPTPDNDPGRETDDKSLKEVFKTFDPTASPFC.

The span at 1–12 shows a compositional bias: basic and acidic residues; the sequence is MTDSEHAGHDRE. The tract at residues 1-105 is disordered; the sequence is MTDSEHAGHD…HKKRTGFYRD (105 aa). Positions 13 to 28 are enriched in acidic residues; it reads DGELEDGEIDDAGFEE. A coiled-coil region spans residues 27-73; that stretch reads EEIQEKEAKENEKQKSEKAYRKSRKKHKKEREKKKSKRRKREKHKHN. Residues 29-46 show a composition bias toward basic and acidic residues; sequence IQEKEAKENEKQKSEKAY. The span at 47 to 73 shows a compositional bias: basic residues; it reads RKSRKKHKKEREKKKSKRRKREKHKHN. 3 consecutive C3H1-type zinc fingers follow at residues 273 to 299, 301 to 328, and 329 to 352; these read KGKQ…HDAE, EKRK…HNEF, and PCKF…HDDL. A coiled-coil region spans residues 353–385; that stretch reads TKETKKLLDKVLNTDEELINEDERELEELRKRG. Disordered regions lie at residues 451–530, 630–659, 676–755, 947–1026, and 1051–1189; these read FYTS…GPQN, PPVV…PVPG, YQED…GNQV, LEQF…PYAP, and PRDH…SPFC. Positions 461–478 are enriched in low complexity; sequence QFQGSSPHPQHIYSSGSS. Residues 505–525 show a composition bias toward pro residues; sequence AGPPGLPVPQSPPLPPGPPEI. The span at 639-659 shows a compositional bias: low complexity; it reads HGSGSDGSSTRTGHGPLPVPG. A compositionally biased stretch (polar residues) spans 718–741; that stretch reads KTLQKQTETLRNQQQPSTELSTPT. The segment covering 961–973 has biased composition (basic and acidic residues); that stretch reads GDPRLQKNFDPRL. 2 stretches are compositionally biased toward low complexity: residues 1009–1020 and 1056–1069; these read SGAGTSNSGSGA and SSST…SSGE. The residue at position 1158 (S1158) is a Phosphoserine. Positions 1164 to 1179 are enriched in basic and acidic residues; that stretch reads DPGRETDDKSLKEVFK.

This chain is Zinc finger CCCH domain-containing protein 6 (ZC3H6), found in Homo sapiens (Human).